The chain runs to 213 residues: MSNEQPKIPQATAKRLPLYYRFLKNLHASGKQRVSSAELSEAVKVDPATIRRDFSYFGALGKKGYGYNVNYLLSFFRRTLEEDEVTEVALFGVGNLGTAFLNYNFSKNNNTKIVMAFDVDERKVGTTVGGVPVYHLDELEERLHENIPVAILTVPAAAAQALTDRLVVQGIKGILNFTPARLNVPNHIRVHHIDLAIELQSLVYFLKNYPSPS.

The segment at residues 18 to 57 is a DNA-binding region (H-T-H motif); sequence LYYRFLKNLHASGKQRVSSAELSEAVKVDPATIRRDFSYF. NAD(+) is bound at residue 92 to 97; it reads GVGNLG.

The protein belongs to the transcriptional regulatory Rex family. In terms of assembly, homodimer.

The protein localises to the cytoplasm. Modulates transcription in response to changes in cellular NADH/NAD(+) redox state. The protein is Redox-sensing transcriptional repressor Rex of Geobacillus kaustophilus (strain HTA426).